The chain runs to 482 residues: Glutamyl-tRNA(Gln) amidotransferase subunit A (482 aa).

Active-site charge relay system residues include lysine 80 and serine 159. Serine 183 acts as the Acyl-ester intermediate in catalysis.

Belongs to the amidase family. GatA subfamily. As to quaternary structure, heterotrimer of A, B and C subunits.

The catalysed reaction is L-glutamyl-tRNA(Gln) + L-glutamine + ATP + H2O = L-glutaminyl-tRNA(Gln) + L-glutamate + ADP + phosphate + H(+). Allows the formation of correctly charged Gln-tRNA(Gln) through the transamidation of misacylated Glu-tRNA(Gln) in organisms which lack glutaminyl-tRNA synthetase. The reaction takes place in the presence of glutamine and ATP through an activated gamma-phospho-Glu-tRNA(Gln). The chain is Glutamyl-tRNA(Gln) amidotransferase subunit A from Neorickettsia sennetsu (strain ATCC VR-367 / Miyayama) (Ehrlichia sennetsu).